Here is a 261-residue protein sequence, read N- to C-terminus: MSDILDRIIAVKREEVRAAEQSAPLEELRLEASSRDIRDFVGALRAKHTAGLAAVISEVKKASPSKGVLREHFVPAEIARSYEKHGAACLSVLTDVQFFQGSVAYLEEARAACNLPVLRKDFIVDPYQIVEARAMGADAILLIAAALETSQMQDLEALAHSLGLAVLVEVHDHDELMESLTLKTPLIGINNRNLRTFETSIETTIGMLEAIPDDRIVVTESGILSRADVERLRAMDVHTFLVGEAFMRANEPGVELARMFF.

The protein belongs to the TrpC family.

The enzyme catalyses 1-(2-carboxyphenylamino)-1-deoxy-D-ribulose 5-phosphate + H(+) = (1S,2R)-1-C-(indol-3-yl)glycerol 3-phosphate + CO2 + H2O. Its pathway is amino-acid biosynthesis; L-tryptophan biosynthesis; L-tryptophan from chorismate: step 4/5. This chain is Indole-3-glycerol phosphate synthase, found in Paraburkholderia phytofirmans (strain DSM 17436 / LMG 22146 / PsJN) (Burkholderia phytofirmans).